A 371-amino-acid polypeptide reads, in one-letter code: S-adenosylmethionine:tRNA ribosyltransferase-isomerase (371 aa).

The protein belongs to the QueA family. In terms of assembly, monomer.

It localises to the cytoplasm. It carries out the reaction 7-aminomethyl-7-carbaguanosine(34) in tRNA + S-adenosyl-L-methionine = epoxyqueuosine(34) in tRNA + adenine + L-methionine + 2 H(+). It functions in the pathway tRNA modification; tRNA-queuosine biosynthesis. Its function is as follows. Transfers and isomerizes the ribose moiety from AdoMet to the 7-aminomethyl group of 7-deazaguanine (preQ1-tRNA) to give epoxyqueuosine (oQ-tRNA). The protein is S-adenosylmethionine:tRNA ribosyltransferase-isomerase of Prochlorococcus marinus (strain MIT 9303).